A 150-amino-acid chain; its full sequence is MNLSNLQPAEGSTHNQNKRVGRGEGSGKGGTAARGHKGAKSRSGYSKKIGFEGGQMPLQRRVPKFGFKNINRKEYEGVNLDTLQLLVDNGVITDSVSMTDFVANRLASKNEIVKILGRGELKAKLKVTAHKFTATAKAAIEAAGGEAVTI.

A compositionally biased stretch (polar residues) spans 1–15 (MNLSNLQPAEGSTHN). The interval 1-53 (MNLSNLQPAEGSTHNQNKRVGRGEGSGKGGTAARGHKGAKSRSGYSKKIGFEG) is disordered. Residues 23 to 32 (GEGSGKGGTA) show a composition bias toward gly residues.

It belongs to the universal ribosomal protein uL15 family. In terms of assembly, part of the 50S ribosomal subunit.

Functionally, binds to the 23S rRNA. The protein is Large ribosomal subunit protein uL15 of Flavobacterium johnsoniae (strain ATCC 17061 / DSM 2064 / JCM 8514 / BCRC 14874 / CCUG 350202 / NBRC 14942 / NCIMB 11054 / UW101) (Cytophaga johnsonae).